The sequence spans 491 residues: MEERKVIIKTGLNLENSYTSLPEIFFTRQNPNRVPSPKLAVLNYPLITSLGLNAQVLQSTDGVDILAGNKTPEEAIPISQAYAGHQFGHFTMLGDGRAILLGEHITPQGERFDIQLKGSGKTPYSRGGDGKAALGPMLREYIISEAMNALGIPTTRSLAVVTTGESIMRETELSGAILTRVAASHIRVGTFEYVSRWGTIQELRALADYTLQRHFKKRNDKDNPYLFLLQEVIKKQAELIAKWQLIGFVHGVMNTDNMTISGETIDYGPCAFMDVYDPKTVFSSIDIYGRYAYGNQPNIAAWNLARLAETLLPLLHINPNEAIKIAENAISDFTKLYKNNWLSGMRGKLGIFNEELEDEYLIEDLLSIMHKYGADYTNTFRALTFDNIEDTVLGGKVEFDKWYKLWQERLTRQEESKLSSRQLMKSSNPSVIPRNHRVEEALEAAVKEGDYSVMEKLLDALSKPYAYSKEQDYYSTLPEPSTCSYQTYCGT.

ATP-binding residues include Gly-94, Gly-96, Arg-97, Lys-117, Asp-129, Gly-130, Arg-180, and Arg-187. Residue Asp-256 is the Proton acceptor of the active site. Residues Asn-257 and Asp-266 each coordinate Mg(2+). ATP is bound at residue Asp-266.

It belongs to the SELO family. The cofactor is Mg(2+). Requires Mn(2+) as cofactor.

The catalysed reaction is L-seryl-[protein] + ATP = 3-O-(5'-adenylyl)-L-seryl-[protein] + diphosphate. It catalyses the reaction L-threonyl-[protein] + ATP = 3-O-(5'-adenylyl)-L-threonyl-[protein] + diphosphate. The enzyme catalyses L-tyrosyl-[protein] + ATP = O-(5'-adenylyl)-L-tyrosyl-[protein] + diphosphate. It carries out the reaction L-histidyl-[protein] + UTP = N(tele)-(5'-uridylyl)-L-histidyl-[protein] + diphosphate. The catalysed reaction is L-seryl-[protein] + UTP = O-(5'-uridylyl)-L-seryl-[protein] + diphosphate. It catalyses the reaction L-tyrosyl-[protein] + UTP = O-(5'-uridylyl)-L-tyrosyl-[protein] + diphosphate. Nucleotidyltransferase involved in the post-translational modification of proteins. It can catalyze the addition of adenosine monophosphate (AMP) or uridine monophosphate (UMP) to a protein, resulting in modifications known as AMPylation and UMPylation. In Clostridium botulinum (strain Okra / Type B1), this protein is Protein nucleotidyltransferase YdiU.